A 142-amino-acid polypeptide reads, in one-letter code: Succinate dehydrogenase subunit 6, mitochondrial (142 aa).

Component of complex II composed of eight subunits in plants: four classical SDH subunits SDH1, SDH2, SDH3 and SDH4 (a flavoprotein (FP), an iron-sulfur protein (IP), and a cytochrome b composed of a large and a small subunit.), as well as four subunits unknown in mitochondria from bacteria and heterotrophic eukaryotes.

It is found in the mitochondrion inner membrane. It functions in the pathway carbohydrate metabolism; tricarboxylic acid cycle. The polypeptide is Succinate dehydrogenase subunit 6, mitochondrial (Oryza sativa subsp. japonica (Rice)).